We begin with the raw amino-acid sequence, 59 residues long: Large ribosomal subunit protein bL32 (59 aa).

Basic residues predominate over residues 1–20 (MAVPKKKTSKGKRNQRHATW). The tract at residues 1-22 (MAVPKKKTSKGKRNQRHATWKG) is disordered.

This sequence belongs to the bacterial ribosomal protein bL32 family.

This is Large ribosomal subunit protein bL32 from Prochlorococcus marinus (strain NATL1A).